The chain runs to 795 residues: Mitochondrial intermediate peptidase (795 aa).

Residues 1-22 (MLKTLNRRSWTCRQCIRILRRN) constitute a mitochondrion transit peptide. H561 lines the Zn(2+) pocket. E562 is an active-site residue. H565 and H568 together coordinate Zn(2+).

The protein belongs to the peptidase M3 family. Requires Zn(2+) as cofactor.

Its subcellular location is the mitochondrion matrix. It carries out the reaction Release of an N-terminal octapeptide as second stage of processing of some proteins imported into the mitochondrion.. Cleaves proteins, imported into the mitochondrion, to their mature size. While most mitochondrial precursor proteins are processed to the mature form in one step by mitochondrial processing peptidase (MPP), the sequential cleavage by MIP of an octapeptide after initial processing by MPP is a required step for a subgroup of nuclear-encoded precursor proteins destined for the matrix or the inner membrane. The protein is Mitochondrial intermediate peptidase (OCT1) of Coccidioides immitis (strain RS) (Valley fever fungus).